Here is a 744-residue protein sequence, read N- to C-terminus: Polyribonucleotide nucleotidyltransferase (744 aa).

Residues D515 and D521 each coordinate Mg(2+). A KH domain is found at 581–640 (PRVITVQVPVDKIGEVIGPKGKMINQIQDDTGADISIEDDGTVFIGATDGPSAEAARQAI). The S1 motif domain occupies 652–724 (GERFVGTVVK…PRGKLSLHAV (73 aa)).

The protein belongs to the polyribonucleotide nucleotidyltransferase family. Mg(2+) serves as cofactor.

The protein localises to the cytoplasm. It carries out the reaction RNA(n+1) + phosphate = RNA(n) + a ribonucleoside 5'-diphosphate. Its function is as follows. Involved in mRNA degradation. Catalyzes the phosphorolysis of single-stranded polyribonucleotides processively in the 3'- to 5'-direction. In Beutenbergia cavernae (strain ATCC BAA-8 / DSM 12333 / CCUG 43141 / JCM 11478 / NBRC 16432 / NCIMB 13614 / HKI 0122), this protein is Polyribonucleotide nucleotidyltransferase.